The chain runs to 513 residues: PPE family protein PPE4 (513 aa).

3 consecutive transmembrane segments (helical) span residues 233-253 (IIIA…PLLF), 277-297 (FLLP…PIVL), and 309-329 (LAAA…AVTG). Disordered stretches follow at residues 395 to 446 (AAAA…ERGA) and 469 to 513 (LAGD…HDSK).

The protein belongs to the mycobacterial PPE family.

The protein localises to the cell membrane. Its function is as follows. Important for the siderophore-mediated iron-acquisition function of ESX-3. This Mycobacterium tuberculosis (strain CDC 1551 / Oshkosh) protein is PPE family protein PPE4 (PPE4).